Here is a 366-residue protein sequence, read N- to C-terminus: GTP cyclohydrolase 1 type 2 homolog (366 aa).

Residues histidine 64, histidine 65, aspartate 102, histidine 326, and glutamate 329 each coordinate Zn(2+).

Belongs to the GTP cyclohydrolase I type 2/NIF3 family. In terms of assembly, homohexamer.

This is GTP cyclohydrolase 1 type 2 homolog from Staphylococcus aureus (strain MRSA252).